Reading from the N-terminus, the 250-residue chain is 5-oxoprolinase subunit A (250 aa).

It belongs to the LamB/PxpA family. Forms a complex composed of PxpA, PxpB and PxpC.

The enzyme catalyses 5-oxo-L-proline + ATP + 2 H2O = L-glutamate + ADP + phosphate + H(+). In terms of biological role, catalyzes the cleavage of 5-oxoproline to form L-glutamate coupled to the hydrolysis of ATP to ADP and inorganic phosphate. The protein is 5-oxoprolinase subunit A of Staphylococcus aureus (strain Mu3 / ATCC 700698).